The chain runs to 702 residues: 1,4-alpha-glucan-branching enzyme (702 aa).

Ala2 is subject to N-acetylalanine. Substrate is bound by residues 62–63 (NE) and 91–93 (WAP). Trp107 provides a ligand contact to (1,4-alpha-D-glucosyl)n. 118 to 121 (DYGK) contacts substrate. Lys143 serves as a coordination point for (1,4-alpha-D-glucosyl)n. Tyr173 carries the phosphotyrosine modification. 333–336 (EILR) contacts substrate. Catalysis depends on Asp357, which acts as the Nucleophile. The active-site Proton donor is Glu412.

This sequence belongs to the glycosyl hydrolase 13 family. GlgB subfamily. As to quaternary structure, monomer.

The catalysed reaction is Transfers a segment of a (1-&gt;4)-alpha-D-glucan chain to a primary hydroxy group in a similar glucan chain.. It functions in the pathway glycan biosynthesis; glycogen biosynthesis. In terms of biological role, glycogen-branching enzyme participates in the glycogen biosynthetic process along with glycogenin and glycogen synthase. Generates alpha-1,6-glucosidic branches from alpha-1,4-linked glucose chains, to increase solubility of the glycogen polymer. This Homo sapiens (Human) protein is 1,4-alpha-glucan-branching enzyme (GBE1).